Reading from the N-terminus, the 143-residue chain is Transcriptional regulator MraZ (143 aa).

SpoVT-AbrB domains follow at residues 5–47 (EYSH…PMAV) and 76–119 (ALEA…SAEN).

Belongs to the MraZ family. As to quaternary structure, forms oligomers.

Its subcellular location is the cytoplasm. The protein localises to the nucleoid. This chain is Transcriptional regulator MraZ, found in Leuconostoc mesenteroides subsp. mesenteroides (strain ATCC 8293 / DSM 20343 / BCRC 11652 / CCM 1803 / JCM 6124 / NCDO 523 / NBRC 100496 / NCIMB 8023 / NCTC 12954 / NRRL B-1118 / 37Y).